The primary structure comprises 136 residues: UPF0225 protein Mpe_A2093 (136 aa).

The protein belongs to the UPF0225 family.

The sequence is that of UPF0225 protein Mpe_A2093 from Methylibium petroleiphilum (strain ATCC BAA-1232 / LMG 22953 / PM1).